We begin with the raw amino-acid sequence, 257 residues long: Adenosylcobinamide-GDP ribazoletransferase (257 aa).

A run of 6 helical transmembrane segments spans residues 7 to 27 (QLTL…PTWV), 39 to 59 (RYFG…YEIT), 61 to 81 (GFLP…VVTG), 113 to 133 (IGTY…ILLS), 143 to 163 (VVTA…SLIF), and 196 to 216 (VLVL…GLVL).

This sequence belongs to the CobS family. The cofactor is Mg(2+).

It is found in the cell inner membrane. The catalysed reaction is alpha-ribazole + adenosylcob(III)inamide-GDP = adenosylcob(III)alamin + GMP + H(+). The enzyme catalyses alpha-ribazole 5'-phosphate + adenosylcob(III)inamide-GDP = adenosylcob(III)alamin 5'-phosphate + GMP + H(+). The protein operates within cofactor biosynthesis; adenosylcobalamin biosynthesis; adenosylcobalamin from cob(II)yrinate a,c-diamide: step 7/7. Joins adenosylcobinamide-GDP and alpha-ribazole to generate adenosylcobalamin (Ado-cobalamin). Also synthesizes adenosylcobalamin 5'-phosphate from adenosylcobinamide-GDP and alpha-ribazole 5'-phosphate. This chain is Adenosylcobinamide-GDP ribazoletransferase, found in Shewanella woodyi (strain ATCC 51908 / MS32).